The sequence spans 219 residues: Probable GTP-binding protein EngB (219 aa).

The EngB-type G domain occupies 24–207 (VQPEVAFAGR…HALIESWVRP (184 aa)). GTP-binding positions include 32–39 (GRSNAGKS), 59–63 (GRTQH), 81–84 (DLPG), 148–151 (TKCD), and 185–188 (LFSA). 2 residues coordinate Mg(2+): Ser39 and Thr61.

It belongs to the TRAFAC class TrmE-Era-EngA-EngB-Septin-like GTPase superfamily. EngB GTPase family. Requires Mg(2+) as cofactor.

In terms of biological role, necessary for normal cell division and for the maintenance of normal septation. This is Probable GTP-binding protein EngB from Burkholderia mallei (strain ATCC 23344).